A 351-amino-acid polypeptide reads, in one-letter code: Quinolinate phosphoribosyltransferase [decarboxylating] 2, mitochondrial (351 aa).

Residues Arg142, 173-175 (TRK), Arg197, Lys207, Glu240, Asp267, 299-301 (SGN), and 320-322 (SGA) contribute to the substrate site.

It belongs to the NadC/ModD family.

The protein resides in the mitochondrion. It carries out the reaction nicotinate beta-D-ribonucleotide + CO2 + diphosphate = quinolinate + 5-phospho-alpha-D-ribose 1-diphosphate + 2 H(+). Its pathway is alkaloid biosynthesis; nicotine biosynthesis. It functions in the pathway cofactor biosynthesis; NAD(+) biosynthesis; nicotinate D-ribonucleotide from quinolinate: step 1/1. Involved in the biosynthesis of pyridine alkaloid natural products, leading mainly to the production of anabasine, anatabine, nicotine and nornicotine, effective deterrents against herbivores with antiparasitic and pesticide properties (neurotoxins); nornicotine serves as the precursor in the synthesis of the carcinogen compound N'-nitrosonornicotine (NNN). Involved in the catabolism of quinolinic acid (QA). The polypeptide is Quinolinate phosphoribosyltransferase [decarboxylating] 2, mitochondrial (Nicotiana glauca (Glaucous tobacco)).